The primary structure comprises 410 residues: Translation initiation factor 2 subunit gamma (410 aa).

The region spanning 6-203 is the tr-type G domain; it reads QSEVNIGMVG…AIQEFIPTPE (198 aa). The interval 15–22 is G1; it reads GHVDHGKT. Residues Asp18, Thr22, Gly43, and Ser45 each contribute to the Mg(2+) site. GTP is bound at residue 18–23; the sequence is DHGKTS. The interval 43-47 is G2; sequence GISIR. Zn(2+)-binding residues include Cys58, Cys61, Cys73, and Cys76. The interval 90–93 is G3; that stretch reads DAPG. Residues 146 to 149 and 181 to 183 contribute to the GTP site; these read NKID and SAH. Residues 146-149 form a G4 region; sequence NKID. The segment at 181–183 is G5; that stretch reads SAH.

It belongs to the TRAFAC class translation factor GTPase superfamily. Classic translation factor GTPase family. EIF2G subfamily. As to quaternary structure, heterotrimer composed of an alpha, a beta and a gamma chain. Mg(2+) serves as cofactor.

It carries out the reaction GTP + H2O = GDP + phosphate + H(+). Its function is as follows. eIF-2 functions in the early steps of protein synthesis by forming a ternary complex with GTP and initiator tRNA. The protein is Translation initiation factor 2 subunit gamma of Methanococcus maripaludis (strain C7 / ATCC BAA-1331).